Consider the following 459-residue polypeptide: uncharacterized protein (459 aa).

Positions 5–63 (PVEEGQKFPLTIRRMGINGEGIGYFKKAVVFVPGAITGEEVVVEAVKVRDRFTEAKLNK) constitute a TRAM domain. Cys-76, Cys-82, Cys-85, and Cys-166 together coordinate [4Fe-4S] cluster. Residues Gln-290, Tyr-319, Asp-340, and Asp-388 each coordinate S-adenosyl-L-methionine. The active-site Nucleophile is Cys-415.

This sequence belongs to the class I-like SAM-binding methyltransferase superfamily. RNA M5U methyltransferase family.

This is an uncharacterized protein from Listeria monocytogenes serovar 1/2a (strain ATCC BAA-679 / EGD-e).